Reading from the N-terminus, the 392-residue chain is ATP-dependent RNA helicase eIF4A (392 aa).

Residues 19–47 (DTFDDMNLKPELLRGIYAYGFERPSAIQQ) carry the Q motif motif. Positions 50–220 (IMPILGERDV…TKFMRDPIRI (171 aa)) constitute a Helicase ATP-binding domain. 63-70 (AQSGTGKT) contacts ATP. S65 bears the Phosphoserine mark. Residues 168–171 (DEAD) carry the DEAD box motif. Positions 231–392 (GIKQFYVAVE…EMPMNIADLI (162 aa)) constitute a Helicase C-terminal domain.

It belongs to the DEAD box helicase family. eIF4A subfamily. As to quaternary structure, component of the eIF4F complex, which composition varies with external and internal environmental conditions. It is composed of at least eIF4A, eIF4E and eIF4G.

The protein resides in the cytoplasm. The enzyme catalyses ATP + H2O = ADP + phosphate + H(+). In terms of biological role, ATP-dependent RNA helicase which is a subunit of the eIF4F complex involved in cap recognition and is required for mRNA binding to ribosome. In the current model of translation initiation, eIF4A unwinds RNA secondary structures in the 5'-UTR of mRNAs which is necessary to allow efficient binding of the small ribosomal subunit, and subsequent scanning for the initiator codon. This is ATP-dependent RNA helicase eIF4A (tif1) from Schizosaccharomyces pombe (strain 972 / ATCC 24843) (Fission yeast).